A 445-amino-acid polypeptide reads, in one-letter code: Tubulin beta-2B chain (445 aa).

The short motif at M1 to I4 is the MREI motif element. Q11 is a GTP binding site. S40 is subject to Phosphoserine. Residue T55 is modified to Phosphothreonine. K58 carries the N6-acetyllysine; alternate modification. Position 58 is an N6-succinyllysine; alternate (K58). K58 is covalently cross-linked (Glycyl lysine isopeptide (Lys-Gly) (interchain with G-Cter in ubiquitin); alternate). Residues E69, S138, G142, T143, and G144 each coordinate GTP. E69 contacts Mg(2+). S172 bears the Phosphoserine; by CDK1 mark. 2 residues coordinate GTP: N204 and N226. Phosphothreonine occurs at positions 285 and 290. The residue at position 318 (R318) is an Omega-N-methylarginine. K324 is covalently cross-linked (Glycyl lysine isopeptide (Lys-Gly) (interchain with G-Cter in ubiquitin)). The segment at Y422 to A445 is disordered. Residues T429–A445 show a composition bias toward acidic residues. Position 438 is a 5-glutamyl polyglutamate (E438).

The protein belongs to the tubulin family. In terms of assembly, dimer of alpha and beta chains. A typical microtubule is a hollow water-filled tube with an outer diameter of 25 nm and an inner diameter of 15 nM. Alpha-beta heterodimers associate head-to-tail to form protofilaments running lengthwise along the microtubule wall with the beta-tubulin subunit facing the microtubule plus end conferring a structural polarity. Microtubules usually have 13 protofilaments but different protofilament numbers can be found in some organisms and specialized cells. It depends on Mg(2+) as a cofactor. Post-translationally, some glutamate residues at the C-terminus are polyglycylated, resulting in polyglycine chains on the gamma-carboxyl group. Glycylation is mainly limited to tubulin incorporated into axonemes (cilia and flagella) whereas glutamylation is prevalent in neuronal cells, centrioles, axonemes, and the mitotic spindle. Both modifications can coexist on the same protein on adjacent residues, and lowering polyglycylation levels increases polyglutamylation, and reciprocally. The precise function of polyglycylation is still unclear. Some glutamate residues at the C-terminus are polyglutamylated, resulting in polyglutamate chains on the gamma-carboxyl group. Polyglutamylation plays a key role in microtubule severing by spastin (SPAST). SPAST preferentially recognizes and acts on microtubules decorated with short polyglutamate tails: severing activity by SPAST increases as the number of glutamates per tubulin rises from one to eight, but decreases beyond this glutamylation threshold. In terms of processing, phosphorylated on Ser-172 by CDK1 during the cell cycle, from metaphase to telophase, but not in interphase. This phosphorylation inhibits tubulin incorporation into microtubules.

The protein resides in the cytoplasm. Its subcellular location is the cytoskeleton. In terms of biological role, tubulin is the major constituent of microtubules, a cylinder consisting of laterally associated linear protofilaments composed of alpha- and beta-tubulin heterodimers. Microtubules grow by the addition of GTP-tubulin dimers to the microtubule end, where a stabilizing cap forms. Below the cap, tubulin dimers are in GDP-bound state, owing to GTPase activity of alpha-tubulin. Implicated in neuronal migration. The sequence is that of Tubulin beta-2B chain (TUBB2B) from Bos taurus (Bovine).